Here is a 152-residue protein sequence, read N- to C-terminus: UPF0266 membrane protein KPK_1957 (152 aa).

3 helical membrane-spanning segments follow: residues 6–26 (LVII…QFIM), 45–65 (VDGL…ITQH), and 67–87 (TPIT…LFWI).

The protein belongs to the UPF0266 family.

The protein resides in the cell inner membrane. The sequence is that of UPF0266 membrane protein KPK_1957 from Klebsiella pneumoniae (strain 342).